The primary structure comprises 556 residues: Peptide chain release factor 3 (556 aa).

One can recognise a tr-type G domain in the interval 28–297; sequence QQRRNFAIIS…AFLDYALKPG (270 aa). GTP contacts are provided by residues 37–44, 105–109, and 159–162; these read SHPDAGKT, DTPGH, and NKMD.

It belongs to the TRAFAC class translation factor GTPase superfamily. Classic translation factor GTPase family. PrfC subfamily.

Its subcellular location is the cytoplasm. Increases the formation of ribosomal termination complexes and stimulates activities of RF-1 and RF-2. It binds guanine nucleotides and has strong preference for UGA stop codons. It may interact directly with the ribosome. The stimulation of RF-1 and RF-2 is significantly reduced by GTP and GDP, but not by GMP. This Synechococcus elongatus (strain ATCC 33912 / PCC 7942 / FACHB-805) (Anacystis nidulans R2) protein is Peptide chain release factor 3.